Here is a 160-residue protein sequence, read N- to C-terminus: Major pollen allergen Bet v 1-J (160 aa).

The brassinolide site is built by Lys-55, Tyr-82, Tyr-84, and Asn-101. Hydrophobic ligand pocket regions lie at residues 116-118 (KIN) and 133-141 (QIKASKEMG).

Belongs to the BetVI family. In terms of tissue distribution, pollen.

It localises to the cytoplasm. May be a general steroid carrier protein. This Betula pendula (European white birch) protein is Major pollen allergen Bet v 1-J.